An 871-amino-acid chain; its full sequence is Pentatricopeptide repeat-containing protein DOT4, chloroplastic (871 aa).

Residues 1–28 (MAMLVTNLSSSSFCFFSSPHLQNQKEIR) constitute a chloroplast transit peptide. PPR repeat units follow at residues 60 to 94 (SVTDANTQLRRFCESGNLENAVKLLCVSGKWDIDP), 96 to 127 (TLCSVLQLCADSKSLKDGKEVDNFIRGNGFVI), 128 to 158 (DSNLGSKLSLMYTNCGDLKEASRVFDEVKIE), 159 to 193 (KALFWNILMNELAKSGDFSGSIGLFKKMMSSGVEM), 194 to 228 (DSYTFSCVSKSFSSLRSVHGGEQLHGFILKSGFGE), 229 to 259 (RNSVGNSLVAFYLKNQRVDSARKVFDEMTER), 260 to 294 (DVISWNSIINGYVSNGLAEKGLSVFVQMLVSGIEI), 295 to 329 (DLATIVSVFAGCADSRLISLGRAVHSIGVKACFSR), 330 to 360 (EDRFCNTLLDMYSKCGDLDSAKAVFREMSDR), 361 to 395 (SVVSYTSMIAGYAREGLAGEAVKLFEEMEEEGISP), 396 to 430 (DVYTVTAVLNCCARYRLLDEGKRVHEWIKENDLGF), 431 to 465 (DIFVSNALMDMYAKCGSMQEAELVFSEMRVKDIIS), 466 to 497 (WNTIIGGYSKNCYANEALSLFNLLLEEKRFSP), 498 to 532 (DERTVACVLPACASLSAFDKGREIHGYIMRNGYFS), 533 to 563 (DRHVANSLVDMYAKCGALLLAHMLFDDIASK), 564 to 598 (DLVSWTVMIAGYGMHGFGKEAIALFNQMRQAGIEA), 599 to 629 (DEISFVSLLYACSHSGLVDEGWRFFNIMRHE), and 635 to 665 (TVEHYACIVDMLARTGDLIKAYRFIENMPIP). Residues 670 to 745 (IWGALLCGCR…NPGCSWIEIK (76 aa)) are type E motif. The interval 746–776 (GRVNIFVAGDSSNPETENIEAFLRKVRARMI) is type E(+) motif. A type DYW motif region spans residues 777 to 871 (EEGYSPLTKY…DGHCSCRGFW (95 aa)).

Belongs to the PPR family. PCMP-H subfamily. Zn(2+) serves as cofactor. As to expression, weakly expressed in leaves.

It localises to the plastid. The protein localises to the chloroplast. In terms of biological role, plays a major role in single RNA editing events in chloroplasts. Acts as a site-recognition transacting factor involved in the edition of the unique site (corresponding to cytidine-488) of rpoC1, which is a plastid-encoded subunit of the chloroplast DNA-directed RNA polymerase. May provide the catalytic activity for editing site conversion. Involved in leaf vasculature patterning. The protein is Pentatricopeptide repeat-containing protein DOT4, chloroplastic of Arabidopsis thaliana (Mouse-ear cress).